A 649-amino-acid polypeptide reads, in one-letter code: tRNA-guanine(15) transglycosylase (649 aa).

The active-site Nucleophile is the Asp88. Residues Asp123 and Ala194 each coordinate substrate. The Zn(2+) site is built by Cys280, Cys282, and Cys285. Residues 573–648 (KYRIVIDSSV…VAATLRGGLK (76 aa)) form the PUA domain.

Belongs to the archaeosine tRNA-ribosyltransferase family. The cofactor is Zn(2+).

The enzyme catalyses guanosine(15) in tRNA + 7-cyano-7-deazaguanine = 7-cyano-7-carbaguanosine(15) in tRNA + guanine. The protein operates within tRNA modification; archaeosine-tRNA biosynthesis. In terms of biological role, exchanges the guanine residue with 7-cyano-7-deazaguanine (preQ0) at position 15 in the dihydrouridine loop (D-loop) of archaeal tRNAs. The polypeptide is tRNA-guanine(15) transglycosylase (Methanococcus maripaludis (strain DSM 14266 / JCM 13030 / NBRC 101832 / S2 / LL)).